The chain runs to 349 residues: NADH-ubiquinone oxidoreductase chain 2 (349 aa).

The next 10 helical transmembrane spans lie at 3-23, 25-45, 66-86, 98-118, 149-171, 178-197, 202-219, 240-260, 274-294, and 319-339; these read PYVL…TFAS, HWLL…PIMA, AAAM…EWEI, VMLA…LPEV, INSS…GGLN, ILAY…LQYA, LLSL…FLTL, LAAL…LSGF, GLPL…YFYL, and FTLI…LLPL.

Belongs to the complex I subunit 2 family.

The protein resides in the mitochondrion inner membrane. The catalysed reaction is a ubiquinone + NADH + 5 H(+)(in) = a ubiquinol + NAD(+) + 4 H(+)(out). Core subunit of the mitochondrial membrane respiratory chain NADH dehydrogenase (Complex I) that is believed to belong to the minimal assembly required for catalysis. Complex I functions in the transfer of electrons from NADH to the respiratory chain. The immediate electron acceptor for the enzyme is believed to be ubiquinone. The protein is NADH-ubiquinone oxidoreductase chain 2 (MT-ND2) of Salmo salar (Atlantic salmon).